The sequence spans 110 residues: uncharacterized protein (110 aa).

3 consecutive transmembrane segments (helical) span residues 5-25, 62-82, and 90-110; these read ILAI…PIHL, FPII…AIVS, and GISI…LISI.

This sequence to A.fulgidus AF1754.

The protein localises to the cell membrane. This is an uncharacterized protein from Methanocaldococcus jannaschii (strain ATCC 43067 / DSM 2661 / JAL-1 / JCM 10045 / NBRC 100440) (Methanococcus jannaschii).